An 880-amino-acid polypeptide reads, in one-letter code: Calcium-transporting ATPase lmo0841 (880 aa).

Helical transmembrane passes span Leu47–Ala67, Leu68–Val88, Leu243–Leu263, and Met271–Pro291. Positions 287, 288, 290, and 292 each coordinate Ca(2+). Asp334 serves as the catalytic 4-aspartylphosphate intermediate. 5 consecutive transmembrane segments (helical) span residues Ile681–Leu701, Phe707–Leu727, Ala756–Met776, Tyr819–Ala839, and Trp854–Val874. Ca(2+)-binding residues include Asn716 and Asp720.

The protein belongs to the cation transport ATPase (P-type) (TC 3.A.3) family. Type IIA subfamily.

It localises to the cell membrane. It carries out the reaction Ca(2+)(in) + ATP + H2O = Ca(2+)(out) + ADP + phosphate + H(+). With respect to regulation, phosphorylation is inhibited by EGTA and vanadate. ATPase activity is stimulated by Sr(2+). Inhibited by very high concentrations of cyclopiazonic acid (CPA). In terms of biological role, catalyzes the hydrolysis of ATP coupled with the transport of calcium. The transport is electrogenic with a probable ATP:Ca(2+):H(+) stoichiometry of 1:1:1. May have an important role in survival of the bacterium when stressed by a combination of a high calcium concentration and alkaline pH. In Listeria monocytogenes serovar 1/2a (strain ATCC BAA-679 / EGD-e), this protein is Calcium-transporting ATPase lmo0841.